The sequence spans 363 residues: Dihydroorotate dehydrogenase (quinone) (363 aa).

FMN is bound by residues 62-66 (AGYDK) and Thr-86. Substrate is bound at residue Lys-66. 111 to 115 (NRLGF) lines the substrate pocket. FMN-binding residues include Asn-140 and Asn-171. Asn-171 is a binding site for substrate. Ser-174 (nucleophile) is an active-site residue. Asn-176 provides a ligand contact to substrate. Positions 216 and 244 each coordinate FMN. 245-246 (NT) contributes to the substrate binding site. FMN-binding positions include Gly-267, Gly-296, and 317 to 318 (YS).

It belongs to the dihydroorotate dehydrogenase family. Type 2 subfamily. As to quaternary structure, monomer. Requires FMN as cofactor.

The protein localises to the cell membrane. The catalysed reaction is (S)-dihydroorotate + a quinone = orotate + a quinol. It functions in the pathway pyrimidine metabolism; UMP biosynthesis via de novo pathway; orotate from (S)-dihydroorotate (quinone route): step 1/1. In terms of biological role, catalyzes the conversion of dihydroorotate to orotate with quinone as electron acceptor. The chain is Dihydroorotate dehydrogenase (quinone) from Allorhizobium ampelinum (strain ATCC BAA-846 / DSM 112012 / S4) (Agrobacterium vitis (strain S4)).